Reading from the N-terminus, the 250-residue chain is DNA polymerase sliding clamp (250 aa).

It belongs to the PCNA family. Homotrimer. The subunits circularize to form a toroid; DNA passes through its center. Replication factor C (RFC) is required to load the toroid on the DNA.

Its function is as follows. Sliding clamp subunit that acts as a moving platform for DNA processing. Responsible for tethering the catalytic subunit of DNA polymerase and other proteins to DNA during high-speed replication. The polypeptide is DNA polymerase sliding clamp (Methanococcus maripaludis (strain C7 / ATCC BAA-1331)).